We begin with the raw amino-acid sequence, 493 residues long: UDP-N-acetylmuramate--L-alanine ligase (493 aa).

112 to 118 contributes to the ATP binding site; that stretch reads GTHGKTT.

This sequence belongs to the MurCDEF family.

It localises to the cytoplasm. The catalysed reaction is UDP-N-acetyl-alpha-D-muramate + L-alanine + ATP = UDP-N-acetyl-alpha-D-muramoyl-L-alanine + ADP + phosphate + H(+). The protein operates within cell wall biogenesis; peptidoglycan biosynthesis. Cell wall formation. In Nitrosospira multiformis (strain ATCC 25196 / NCIMB 11849 / C 71), this protein is UDP-N-acetylmuramate--L-alanine ligase.